Here is a 207-residue protein sequence, read N- to C-terminus: MKIINAAFIRSVSALQDLPDERVPEIVFAGRSNVGKSSLLNSLTGRKGLAKTSSTPGKTRLLNYFLINDDLYFVDIPGYGYAAVSHTEKDAWGRLLAGYVGGRQAIALVVLLLDSRHPAMESDREMMEFLAYHDRPYGIVLTKDDKLTQKERAKAKRVTASCALNAEFIVSYSSISGKGKKELLAHFDHYLSGESSGAGSDSAVTVT.

The EngB-type G domain occupies 22 to 193 (RVPEIVFAGR…LAHFDHYLSG (172 aa)). Residues 30–37 (GRSNVGKS), 57–61 (GKTRL), 75–78 (DIPG), 142–145 (TKDD), and 172–174 (YSS) contribute to the GTP site. Serine 37 and threonine 59 together coordinate Mg(2+).

This sequence belongs to the TRAFAC class TrmE-Era-EngA-EngB-Septin-like GTPase superfamily. EngB GTPase family. Requires Mg(2+) as cofactor.

In terms of biological role, necessary for normal cell division and for the maintenance of normal septation. The chain is Probable GTP-binding protein EngB from Chlorobium luteolum (strain DSM 273 / BCRC 81028 / 2530) (Pelodictyon luteolum).